A 232-amino-acid chain; its full sequence is 5'-methylthioadenosine/S-adenosylhomocysteine nucleosidase (232 aa).

The active-site Proton acceptor is Glu-12. Substrate contacts are provided by residues Gly-78, Ile-152, and 173–174 (ME). Catalysis depends on Asp-197, which acts as the Proton donor.

The protein belongs to the PNP/UDP phosphorylase family. MtnN subfamily. In terms of assembly, homodimer.

The catalysed reaction is S-adenosyl-L-homocysteine + H2O = S-(5-deoxy-D-ribos-5-yl)-L-homocysteine + adenine. It carries out the reaction S-methyl-5'-thioadenosine + H2O = 5-(methylsulfanyl)-D-ribose + adenine. The enzyme catalyses 5'-deoxyadenosine + H2O = 5-deoxy-D-ribose + adenine. It participates in amino-acid biosynthesis; L-methionine biosynthesis via salvage pathway; S-methyl-5-thio-alpha-D-ribose 1-phosphate from S-methyl-5'-thioadenosine (hydrolase route): step 1/2. In terms of biological role, catalyzes the irreversible cleavage of the glycosidic bond in both 5'-methylthioadenosine (MTA) and S-adenosylhomocysteine (SAH/AdoHcy) to adenine and the corresponding thioribose, 5'-methylthioribose and S-ribosylhomocysteine, respectively. Also cleaves 5'-deoxyadenosine, a toxic by-product of radical S-adenosylmethionine (SAM) enzymes, into 5-deoxyribose and adenine. Thus, is required for in vivo function of the radical SAM enzymes biotin synthase and lipoic acid synthase, that are inhibited by 5'-deoxyadenosine accumulation. The chain is 5'-methylthioadenosine/S-adenosylhomocysteine nucleosidase from Salmonella paratyphi B (strain ATCC BAA-1250 / SPB7).